Reading from the N-terminus, the 812-residue chain is Collagen-like protein 5 (812 aa).

2 N-linked (GlcNAc...) asparagine; by host glycosylation sites follow: asparagine 13 and asparagine 83. 3 Collagen-like domains span residues 69 to 128 (GASG…KGDD), 143 to 502 (GEKG…KGDN), and 506 to 565 (GETG…KGEA). The segment at 71–568 (SGAQGVKGDP…PGIKGEAGTN (498 aa)) is disordered. Basic and acidic residues-rich tracts occupy residues 88–112 (TKGE…EKGD), 121–435 (SKGD…ETGS), 444–523 (SKGD…KGIK), and 531–561 (VKGD…DPGI). A glycan (N-linked (GlcNAc...) asparagine; by host) is linked at asparagine 502. Residues asparagine 637, asparagine 658, and asparagine 667 are each glycosylated (N-linked (GlcNAc...) asparagine; by host). Residues 730-802 (GQARTNGAST…VSASGGRGGD (73 aa)) are disordered. Positions 752-765 (FGGGGGGASGFAKG) are enriched in gly residues.

In terms of processing, may be hydroxylated on lysine by the viral-encoded procollagen-lysine,2-oxoglutarate 5-dioxygenase.

The protein resides in the virion. May participate in the formation of a layer of cross-linked glycosylated fibrils at the viral surface thus giving it a hairy-like appearance. This is Collagen-like protein 5 from Acanthamoeba polyphaga (Amoeba).